The following is a 305-amino-acid chain: Coiled-coil domain-containing protein 83 (305 aa).

The segment at 1 to 25 (MDSSAKGSKKDAPDGPPKDSKLPVS) is disordered. Residues 8–21 (SKKDAPDGPPKDSK) are compositionally biased toward basic and acidic residues. Residues 37 to 186 (ENAVERFMFH…LEDEKKRISR (150 aa)) are a coiled coil.

The chain is Coiled-coil domain-containing protein 83 (Ccdc83) from Mus musculus (Mouse).